The following is a 623-amino-acid chain: 1-butanol dehydrogenase (quinone) (623 aa).

Positions 1 to 28 (MKKSHAKPFALRAIVVATAAALSLPAAA) are cleaved as a signal peptide. Residues Asp-40, Thr-43, and Asp-46 each contribute to the Ca(2+) site. Glu-90 is a pyrroloquinoline quinone binding site. Cys-134 and Cys-135 form a disulfide bridge. Pyrroloquinoline quinone is bound by residues Arg-140, Thr-184, and 202-204 (HGS). Glu-208 provides a ligand contact to Ca(2+). Positions 235–274 (HMGRLNGKDSTPTGDPKAPSWPDDPNSPTGKVEAWSQGGG) are disordered. Ca(2+)-binding residues include Asn-295 and Asp-345. Catalysis depends on Asp-345, which acts as the Proton acceptor. Residue Arg-374 coordinates pyrroloquinoline quinone. Positions 420 to 440 (GKPIEKDNRPPQPKEGADKGE) are disordered. A pyrroloquinoline quinone-binding site is contributed by Ala-592.

It belongs to the bacterial PQQ dehydrogenase family. Requires pyrroloquinoline quinone as cofactor. Ca(2+) is required as a cofactor.

The protein resides in the periplasm. It catalyses the reaction butan-1-ol + a quinone = butanal + a quinol. Functionally, involved in the metabolism of butane. May function primarily in energy generation. Catalyzes the oxidation of 1-butanol to 1-butanal. Also able to use 2-butanol and butyraldehyde, although the affinity is comparatively low. This is 1-butanol dehydrogenase (quinone) from Thauera butanivorans (strain ATCC 43655 / DSM 2080 / JCM 20651 / CCUG 51053 / NBRC 103042 / IAM 12574 / Bu B1211) (Pseudomonas butanovora).